Consider the following 432-residue polypeptide: Metacaspase-1 (432 aa).

A compositionally biased stretch (basic residues) spans 1 to 11; sequence MEVMDHHHHTS. 2 disordered regions span residues 1 to 21 and 41 to 87; these read MEVMDHHHHTSSTRPNPTTRR and PQPG…PNAP. Positions 12-21 are enriched in low complexity; that stretch reads STRPNPTTRR. Residues 46 to 74 show a composition bias toward pro residues; the sequence is GAPPPQGGYGYPQPPPPQQPYGYSQPPPQ. Residues His-223 and Cys-279 contribute to the active site.

It belongs to the peptidase C14B family.

Its function is as follows. Involved in cell death (apoptosis). The protein is Metacaspase-1 (casA) of Sclerotinia sclerotiorum (strain ATCC 18683 / 1980 / Ss-1) (White mold).